The chain runs to 568 residues: Urease subunit alpha (568 aa).

Residues 130–568 enclose the Urease domain; sequence GGIDTHIHFI…LPMAQRYFLF (439 aa). Positions 135, 137, and 218 each coordinate Ni(2+). The residue at position 218 (K218) is an N6-carboxylysine. H220 contributes to the substrate binding site. 2 residues coordinate Ni(2+): H247 and H273. The active-site Proton donor is the H321. D361 contacts Ni(2+).

This sequence belongs to the metallo-dependent hydrolases superfamily. Urease alpha subunit family. In terms of assembly, heterotrimer of UreA (gamma), UreB (beta) and UreC (alpha) subunits. Three heterotrimers associate to form the active enzyme. Ni cation is required as a cofactor. Carboxylation allows a single lysine to coordinate two nickel ions.

It localises to the cytoplasm. It carries out the reaction urea + 2 H2O + H(+) = hydrogencarbonate + 2 NH4(+). It functions in the pathway nitrogen metabolism; urea degradation; CO(2) and NH(3) from urea (urease route): step 1/1. The sequence is that of Urease subunit alpha from Burkholderia ambifaria (strain ATCC BAA-244 / DSM 16087 / CCUG 44356 / LMG 19182 / AMMD) (Burkholderia cepacia (strain AMMD)).